The following is a 520-amino-acid chain: Cilia- and flagella-associated protein 157 (520 aa).

Residues 1–22 (MAPKKSVSKAGKELEVKKKGGK) form a disordered region. The span at 10–22 (AGKELEVKKKGGK) shows a compositional bias: basic and acidic residues. Coiled coils occupy residues 33-189 (LAKE…LEKK) and 236-372 (LQMA…QATS). Positions 416–453 (PQKAACPHQESQSHGPPKESRPSIQLPRTGSLLPQLSD) are disordered. Polar residues predominate over residues 437–453 (PSIQLPRTGSLLPQLSD).

It belongs to the CFAP157 family. As to quaternary structure, interacts with TUBB and TUBA4A. Interacts with CEP350.

The protein resides in the cytoplasm. It is found in the cytoskeleton. The protein localises to the cilium basal body. Specifically required during spermatogenesis for flagellum morphogenesis and sperm motility. May be required to suppress the formation of supernumerary axonemes and ensure a correct ultrastructure. The chain is Cilia- and flagella-associated protein 157 from Homo sapiens (Human).